The following is a 250-amino-acid chain: Ubiquitin-conjugating enzyme E2 6 (250 aa).

Residues 1-232 (MATKQAHKRL…DGKEPNDSSS (232 aa)) are Cytoplasmic-facing. Residues 5-167 (QAHKRLTKEY…VQENVETLEK (163 aa)) form the UBC core domain. The Glycyl thioester intermediate role is filled by C87. S139 carries the post-translational modification Phosphoserine. At T178 the chain carries Phosphothreonine. Residues 209–229 (AEQALRQSENNSKKDGKEPND) are disordered. Residues 219–228 (NSKKDGKEPN) are compositionally biased toward basic and acidic residues. Residues 233–249 (MVYIGIAIFLFLVGLFM) traverse the membrane as a helical segment.

Belongs to the ubiquitin-conjugating enzyme family.

It is found in the endoplasmic reticulum membrane. It catalyses the reaction S-ubiquitinyl-[E1 ubiquitin-activating enzyme]-L-cysteine + [E2 ubiquitin-conjugating enzyme]-L-cysteine = [E1 ubiquitin-activating enzyme]-L-cysteine + S-ubiquitinyl-[E2 ubiquitin-conjugating enzyme]-L-cysteine.. It participates in protein modification; protein ubiquitination. Its function is as follows. Catalyzes the covalent attachment of ubiquitin to other proteins. Functions in degradation of misfolded or regulated proteins localized in the endoplasmic reticulum (ER) lumen or membrane via the ubiquitin-proteasome system. Cognate E2 conjugating enzyme for the DOA10 ubiquitin ligase complex, which is part of the ERAD-C pathway responsible for the rapid degradation of membrane proteins with misfolded cytoplasmic domains. This Saccharomyces cerevisiae (strain ATCC 204508 / S288c) (Baker's yeast) protein is Ubiquitin-conjugating enzyme E2 6 (UBC6).